A 629-amino-acid polypeptide reads, in one-letter code: Protein EDS1B (629 aa).

The active-site Nucleophile is the serine 123. Catalysis depends on charge relay system residues aspartate 187 and histidine 317.

In terms of assembly, interacts (via N-terminus) with PAD4 and SAG101. Part of a nuclear complex made of EDS1, PAD4 and SAG101, that can be redirected to the cytoplasm in the presence of an extranuclear form of EDS1. Does not interact with itself or with EDS1.

The protein localises to the nucleus. The protein resides in the cytoplasm. In terms of biological role, acts as a second functional copy of EDS1. Can mediate HRT-mediated resistance to turnip crinkle virus. This Arabidopsis thaliana (Mouse-ear cress) protein is Protein EDS1B (EDS1B).